A 262-amino-acid polypeptide reads, in one-letter code: Acyl-[acyl-carrier-protein]--UDP-N-acetylglucosamine O-acyltransferase (262 aa).

The protein belongs to the transferase hexapeptide repeat family. LpxA subfamily. Homotrimer.

The protein resides in the cytoplasm. The enzyme catalyses a (3R)-hydroxyacyl-[ACP] + UDP-N-acetyl-alpha-D-glucosamine = a UDP-3-O-[(3R)-3-hydroxyacyl]-N-acetyl-alpha-D-glucosamine + holo-[ACP]. It participates in glycolipid biosynthesis; lipid IV(A) biosynthesis; lipid IV(A) from (3R)-3-hydroxytetradecanoyl-[acyl-carrier-protein] and UDP-N-acetyl-alpha-D-glucosamine: step 1/6. Involved in the biosynthesis of lipid A, a phosphorylated glycolipid that anchors the lipopolysaccharide to the outer membrane of the cell. The protein is Acyl-[acyl-carrier-protein]--UDP-N-acetylglucosamine O-acyltransferase of Shigella boydii serotype 18 (strain CDC 3083-94 / BS512).